Reading from the N-terminus, the 174-residue chain is ATP synthase subunit delta (174 aa).

This sequence belongs to the ATPase delta chain family. F-type ATPases have 2 components, F(1) - the catalytic core - and F(0) - the membrane proton channel. F(1) has five subunits: alpha(3), beta(3), gamma(1), delta(1), epsilon(1). F(0) has three main subunits: a(1), b(2) and c(10-14). The alpha and beta chains form an alternating ring which encloses part of the gamma chain. F(1) is attached to F(0) by a central stalk formed by the gamma and epsilon chains, while a peripheral stalk is formed by the delta and b chains.

The protein resides in the cell inner membrane. Functionally, f(1)F(0) ATP synthase produces ATP from ADP in the presence of a proton or sodium gradient. F-type ATPases consist of two structural domains, F(1) containing the extramembraneous catalytic core and F(0) containing the membrane proton channel, linked together by a central stalk and a peripheral stalk. During catalysis, ATP synthesis in the catalytic domain of F(1) is coupled via a rotary mechanism of the central stalk subunits to proton translocation. This protein is part of the stalk that links CF(0) to CF(1). It either transmits conformational changes from CF(0) to CF(1) or is implicated in proton conduction. The sequence is that of ATP synthase subunit delta from Fusobacterium nucleatum subsp. nucleatum (strain ATCC 25586 / DSM 15643 / BCRC 10681 / CIP 101130 / JCM 8532 / KCTC 2640 / LMG 13131 / VPI 4355).